A 256-amino-acid polypeptide reads, in one-letter code: 2-aminoethanethiol dioxygenase (256 aa).

Fe cation is bound by residues His100, His102, and His179.

As to quaternary structure, monomer. The cofactor is Fe cation. In terms of tissue distribution, ubiquitous, with highest expression in brain, heart and skeletal muscle (at protein level).

It carries out the reaction cysteamine + O2 = hypotaurine + H(+). The enzyme catalyses N-terminal L-cysteinyl-[protein] + O2 = N-terminal S-hydroxy-S-oxy-L-cysteinyl-[protein] + H(+). Plays a vital role in regulating thiol metabolism and preserving oxygen homeostasis by oxidizing the sulfur of cysteamine and N-terminal cysteine-containing proteins to their corresponding sulfinic acids using O2 as a cosubstrate. Catalyzes the oxidation of cysteamine (2-aminoethanethiol) to hypotaurine. Catalyzes the oxidation of the regulator of G-protein signaling 5 (RGS5). Also oxidizes proteins RGS4 and interleukin-32 (IL32). This Mus musculus (Mouse) protein is 2-aminoethanethiol dioxygenase (Ado).